Consider the following 197-residue polypeptide: Carbohydrate-binding domain-containing protein C2E1P3.05c (197 aa).

An N-terminal signal peptide occupies residues 1–23 (MLTQSLFLTVLTLALSLVSKTSA). 2 consecutive CBM1 domains span residues 25-61 (QCSP…SQCI) and 68-104 (PCAK…SQCI). Intrachain disulfides connect Cys-33–Cys-50, Cys-44–Cys-60, Cys-76–Cys-93, and Cys-87–Cys-103. The segment at 115–163 (SSAASSTTSTTSSSSLVSSTTLTSSSPSAVSSTTSIPSISSTISSSVST) is disordered. N-linked (GlcNAc...) asparagine glycans are attached at residues Asn-182 and Asn-193.

Its subcellular location is the secreted. This Schizosaccharomyces pombe (strain 972 / ATCC 24843) (Fission yeast) protein is Carbohydrate-binding domain-containing protein C2E1P3.05c.